A 339-amino-acid polypeptide reads, in one-letter code: tRNA N6-adenosine threonylcarbamoyltransferase (339 aa).

Residues histidine 114 and histidine 118 each coordinate Fe cation. Residues 137 to 141 (VVSGG), aspartate 170, glycine 183, aspartate 187, and asparagine 277 each bind substrate. Aspartate 305 provides a ligand contact to Fe cation.

This sequence belongs to the KAE1 / TsaD family. Fe(2+) is required as a cofactor.

The protein localises to the cytoplasm. The catalysed reaction is L-threonylcarbamoyladenylate + adenosine(37) in tRNA = N(6)-L-threonylcarbamoyladenosine(37) in tRNA + AMP + H(+). Its function is as follows. Required for the formation of a threonylcarbamoyl group on adenosine at position 37 (t(6)A37) in tRNAs that read codons beginning with adenine. Is involved in the transfer of the threonylcarbamoyl moiety of threonylcarbamoyl-AMP (TC-AMP) to the N6 group of A37, together with TsaE and TsaB. TsaD likely plays a direct catalytic role in this reaction. The polypeptide is tRNA N6-adenosine threonylcarbamoyltransferase (Clostridium perfringens (strain SM101 / Type A)).